We begin with the raw amino-acid sequence, 380 residues long: Set1 complex component swd3 (380 aa).

7 WD repeats span residues 52-91 (GHEKSVTCVSVSPNKRWIATSSSDGTIKIWSALTFRLECT), 94-133 (GHYRGISQVKWATGSKYLASASDDKTIRIWDFEKRCSVRC), 136-177 (GHTN…RMLP), 179-219 (HSEP…KTLV), 221-262 (PINV…RIFD), 291-330 (NDSSYPDDAESFMHDAYLLIPSEDGTIQITDPSTKIIIDD), and 335-374 (SDDPETSLLNVTSLGPFIITSGTDPYVRVWAPSLLLSKHE). Serine 379 carries the post-translational modification Phosphoserine.

As to quaternary structure, component of the Set1 complex composed of ash2, sdc1, set1, shg1, spp1, swd1, swd2 and swd3.

It localises to the nucleus. In terms of biological role, the Set1 complex specifically methylates 'Lys-4' of histone H3. The polypeptide is Set1 complex component swd3 (Schizosaccharomyces pombe (strain 972 / ATCC 24843) (Fission yeast)).